We begin with the raw amino-acid sequence, 636 residues long: MCGICCVVALSSQHTICDYFSKDLHCHLRRRGPDSSQQLIKTVSEPSYECFFSGHVLHLRGLMTPQPLEDVNNNIFFWNGEIFNGVHVGDSENDTEVMFRHLALCSSEADILSLFSSLRGPWSFIYYQASGHSLWFGRDYFGRRSLLWQLSNVSDGAFCLTSVSVNSESCNQCQEVPASGIFKMDLRDCATTKSLSLTLFPWKYKCTEKNEEEIFIDVLDQVSKDLPNHITVVMNESKLCLSAPVIPLNRTISEASVEHVSSDSSKTSSVVSLETLQGYLAVEHKRKVVHQFIDVLDEAVKRRVLLLRRGEDEGTGQVQGVSPRKAHVAVLFSGGVDSMVIAALADRHVPLEEPIDLLNVAFMTKEQTKRTGTTKNCIRQEMKLDLHRGEENHKDLDAKMGDDLSCFDVPDRITGRAGLKELEALNPSRTWNFVEINVTLKELKEMRRRFINHLIYPLDTVLDDSIGCAIWFASRGEGYINKQGEMKPYKSPAKVVLTGIGADEQLAGYSRHRICFRKCGPEGLNKELEMELGRISSRNLGRDDRIIGDHGKEARFPFIDEDVVSFLNSLPISEKADLTLPRGVGEKLILRLGAKELGLEAASILPKRAVQFGSRIAKLESNNEKAYHTCSRLKLF.

Catalysis depends on Cys2, which acts as the Nucleophile. The Glutamine amidotransferase type-2 domain occupies 2 to 187 (CGICCVVALS…ASGIFKMDLR (186 aa)). In terms of domain architecture, Asparagine synthetase spans 291 to 607 (QFIDVLDEAV…GLEAASILPK (317 aa)).

The protein is Asparagine synthetase domain-containing protein 1 (ASNSD1) of Gallus gallus (Chicken).